Here is a 459-residue protein sequence, read N- to C-terminus: Prenyltransferase penI (459 aa).

L-tryptophan is bound by residues 107–108 (VV) and Glu111. Substrate is bound by residues Arg126, Arg276, Lys278, Tyr280, and Tyr384.

Belongs to the tryptophan dimethylallyltransferase family.

The enzyme catalyses quinolinone B + dimethylallyl diphosphate = peniprequinolone + diphosphate. It functions in the pathway secondary metabolite biosynthesis. It participates in alkaloid biosynthesis. The protein operates within mycotoxin biosynthesis. Its function is as follows. Prenyltransferase; part of the gene cluster that mediates the biosynthesis of penigequinolones, potent insecticidal alkaloids that contain a highly modified 10-carbon prenyl group. The first stage is catalyzed by the nonribosomal peptide synthetase penN that condenses anthranilic acid and O-methyl-L-tyrosine to produce 4'-methoxycyclopeptin. 4'-methoxycyclopeptin is then converted to 4'-methoxydehydrocyclopeptin by the ketoglutarate-dependent dioxygenase penM through dehydrogenation to form a double bond between C-alpha and C-beta of the O-methyltyrosine side chain. PenM also converts its first product methoxydehydrocyclopeptin to 4'-methoxycyclopenin. The following conversion of 4'methoxycyclopenin into 4'-methoxyviridicatin is catalyzed by the cyclopenase penL. 4'-methoxyviridicatin is the precursor of quinolone natural products, and is further converted to quinolinone B. The prenyltransferase penI then catalyzes the canonical Friedel-Crafts alkylation of quinolinone B with dimethylallyl cation to yield dimethylallyl quinolone, which is subjected to FAD-dependent dehydrogenation by the FAD-linked oxidoreductase penH to yield conjugated aryl diene. The delta(3') double bond then serves as the site of the second alkylation with DMAPP catalyzed by the prenyltransferase penG to yield a carbenium ion intermediate, which can be attacked by H(2)O to yield a styrenyl quinolone containing a C3'-hydroxyprenyl chain, or undergo cyclization to yield yaequinolones J1 and J2. The conversion of the styrenyl quinolone into the tetrahydrofuran-containing yaequinolone C is performed by the FAD-dependent monooxygenase penE and involves epoxidation of the terminal C7'-C8' olefin, followed by epoxide ring opening initiated by the C3' hydroxyl group. The predicted cysteine hydrolase penJ acts as an epoxide hydrolase that enhances the rate of the 5-exo-tet cyclization step, increasing the yield of yaequinolone C. PenF catalyzes the cationic rearrangement of the epoxide formed by penE (before ring opening to produce yaequinolone C) into yaequinolone D. Finally, the short-chain dehydrogenase/reductase (SDR)-like reductase penD, catalyzes both the dehydration of yaequinolone D and the reduction of the resulting oxonium to yield penigequinolone. The sequence is that of Prenyltransferase penI from Penicillium thymicola.